The following is a 244-amino-acid chain: tRNA (guanine-N(1)-)-methyltransferase (244 aa).

S-adenosyl-L-methionine contacts are provided by residues G112 and 131–136 (IGDFIV).

The protein belongs to the RNA methyltransferase TrmD family. As to quaternary structure, homodimer.

The protein localises to the cytoplasm. The catalysed reaction is guanosine(37) in tRNA + S-adenosyl-L-methionine = N(1)-methylguanosine(37) in tRNA + S-adenosyl-L-homocysteine + H(+). Functionally, specifically methylates guanosine-37 in various tRNAs. The protein is tRNA (guanine-N(1)-)-methyltransferase of Clostridium kluyveri (strain NBRC 12016).